Consider the following 478-residue polypeptide: Tubulin gamma chain (478 aa).

Ala141–Gly147 is a GTP binding site. Residues Ile451–Leu478 form a disordered region. Polar residues predominate over residues Leu459 to Asn468.

It belongs to the tubulin family.

The protein resides in the cytoplasm. Its subcellular location is the cytoskeleton. It is found in the microtubule organizing center. It localises to the centrosome. In terms of biological role, tubulin is the major constituent of microtubules. The gamma chain is found at microtubule organizing centers (MTOC) such as the spindle poles or the centrosome, suggesting that it is involved in the minus-end nucleation of microtubule assembly. In Reticulomyxa filosa, this protein is Tubulin gamma chain.